The sequence spans 504 residues: Activin receptor type-1 (504 aa).

Positions 1–16 are cleaved as a signal peptide; that stretch reads MALPVLLLLLALPSRS. Over 17 to 119 the chain is Extracellular; it reads VQDEELKLNE…EAAGYSMETL (103 aa). An N-linked (GlcNAc...) asparagine glycan is attached at Asn94. Residues 120–140 traverse the membrane as a helical segment; it reads IIVILAPVVVLVIFSVVAVLI. Over 141–504 the chain is Cytoplasmic; it reads IRRIQKNHME…NSLDKLKADC (364 aa). The 30-residue stretch at 173-202 folds into the GS domain; it reads STLADLLDHSCTSGSGSGLPFLVQRTVARQ. Positions 203-497 constitute a Protein kinase domain; sequence ITLVECVGKG…KTLTKIDNSL (295 aa). Residues 209–217 and Lys230 contribute to the ATP site; that span reads VGKGRYGEV. Residue Asp331 is the Proton acceptor of the active site.

It belongs to the protein kinase superfamily. TKL Ser/Thr protein kinase family. TGFB receptor subfamily. Requires Mg(2+) as cofactor. Mn(2+) is required as a cofactor.

It is found in the membrane. The catalysed reaction is L-threonyl-[receptor-protein] + ATP = O-phospho-L-threonyl-[receptor-protein] + ADP + H(+). It carries out the reaction L-seryl-[receptor-protein] + ATP = O-phospho-L-seryl-[receptor-protein] + ADP + H(+). Functionally, on ligand binding, forms a receptor complex consisting of two type II and two type I transmembrane serine/threonine kinases. Type II receptors phosphorylate and activate type I receptors which autophosphorylate, then bind and activate SMAD transcriptional regulators. Receptor for activin. This is Activin receptor type-1 (ACVR1) from Gallus gallus (Chicken).